Here is a 331-residue protein sequence, read N- to C-terminus: Glucokinase (331 aa).

Residue 16–21 coordinates ATP; sequence GDIGGT.

This sequence belongs to the bacterial glucokinase family.

Its subcellular location is the cytoplasm. It catalyses the reaction D-glucose + ATP = D-glucose 6-phosphate + ADP + H(+). The protein is Glucokinase of Pseudomonas aeruginosa (strain UCBPP-PA14).